We begin with the raw amino-acid sequence, 356 residues long: Guanine nucleotide-binding protein alpha-17 subunit (356 aa).

A lipid anchor (N-myristoyl glycine) is attached at Gly-2. Residue Cys-4 is the site of S-palmitoyl cysteine attachment. The region spanning 32–356 is the G-alpha domain; that stretch reads SIVKLLLLGA…QKNLQKAGMM (325 aa). The tract at residues 35-48 is G1 motif; it reads KLLLLGAGECGKST. GTP contacts are provided by residues 40 to 47, 177 to 183, 202 to 206, 271 to 274, and Ala-328; these read GAGECGKS, LYSRVAT, DVGGQ, and NKKD. Mg(2+) contacts are provided by Ser-47 and Thr-183. The tract at residues 175–183 is G2 motif; sequence DILYSRVAT. A G3 motif region spans residues 198–207; the sequence is FRVFDVGGQR. The tract at residues 267-274 is G4 motif; sequence ILFMNKKD. The segment at 326–331 is G5 motif; that stretch reads TCATDT.

This sequence belongs to the G-alpha family. As to quaternary structure, g proteins are composed of 3 units; alpha, beta and gamma. The alpha chain contains the guanine nucleotide binding site. As to expression, expressed in sensory neurons in the head and tail. Expressed in amphid AWC neurons, to a lesser extent in AWB and weakly in AWA, ASH and ADF neurons (head sensory neurons). Expressed in phasmid PHA and PHB neurons (tail sensory neurons).

Its subcellular location is the cell projection. The protein localises to the cilium. It is found in the dendrite. In terms of biological role, guanine nucleotide-binding proteins (G proteins) are involved as modulators or transducers in various transmembrane signaling systems. This specific G-alpha subunit plays an important role in olfaction and in cilia morphogenesis. Involved in chemotactic responses to attractants diacetyl, pyrazine, 2,4,5-trimethylthiazole, benzaldehyde, isoamyl alcohol, butanone and 2,3-pentanedione. Displays a redundant function with gpa-3 in chemotactic responses. Plays a role in the avoidance response to the noxious chemical quinine in ASH sensory neurons. Involved in avoidance responses to copper, sodium dodecyl sulfate and linoleic acid. Involved in osmotic avoidance and mechanosensory responses. Involved in specifying fan-like morphology of cilia of head sensory neurons AWC. Plays a role in the detection of preferred food sources by mediating the recognition of food odors in olfactory sensory neurons. The polypeptide is Guanine nucleotide-binding protein alpha-17 subunit (Caenorhabditis elegans).